The chain runs to 161 residues: Cyclic pyranopterin monophosphate synthase (161 aa).

Residues 75 to 77 (LCH) and 113 to 114 (ME) contribute to the substrate site. Residue Asp128 is part of the active site.

This sequence belongs to the MoaC family. As to quaternary structure, homohexamer; trimer of dimers.

The catalysed reaction is (8S)-3',8-cyclo-7,8-dihydroguanosine 5'-triphosphate = cyclic pyranopterin phosphate + diphosphate. It functions in the pathway cofactor biosynthesis; molybdopterin biosynthesis. Catalyzes the conversion of (8S)-3',8-cyclo-7,8-dihydroguanosine 5'-triphosphate to cyclic pyranopterin monophosphate (cPMP). This Erwinia tasmaniensis (strain DSM 17950 / CFBP 7177 / CIP 109463 / NCPPB 4357 / Et1/99) protein is Cyclic pyranopterin monophosphate synthase.